The following is a 144-amino-acid chain: Signal recognition particle 19 kDa protein (144 aa).

Residues 117 to 144 (TRTQKTGGGDQSLQQGEGSKKGKGKKKK) form a disordered region.

The protein belongs to the SRP19 family. In terms of assembly, component of a signal recognition particle complex that consists of a 7SL RNA molecule of 300 nucleotides and six protein subunits: SRP72, SRP68, SRP54, SRP19, SRP14 and SRP9. Interacts with IPO5, IPO7, IPO8, KPNB1 and TNPO1. Interactions with IPO8 and TNPO1 may be involved in SRP19 import into the nucleus.

The protein resides in the cytoplasm. It localises to the nucleus. The protein localises to the nucleolus. Its subcellular location is the nucleoplasm. Its function is as follows. Component of the signal recognition particle (SRP) complex, a ribonucleoprotein complex that mediates the cotranslational targeting of secretory and membrane proteins to the endoplasmic reticulum (ER). Binds directly to 7SL RNA. Mediates binding of SRP54 to the SRP complex. The protein is Signal recognition particle 19 kDa protein of Canis lupus familiaris (Dog).